We begin with the raw amino-acid sequence, 315 residues long: Methionyl-tRNA formyltransferase (315 aa).

115–118 is a (6S)-5,6,7,8-tetrahydrofolate binding site; that stretch reads SLLP.

Belongs to the Fmt family.

It carries out the reaction L-methionyl-tRNA(fMet) + (6R)-10-formyltetrahydrofolate = N-formyl-L-methionyl-tRNA(fMet) + (6S)-5,6,7,8-tetrahydrofolate + H(+). In terms of biological role, attaches a formyl group to the free amino group of methionyl-tRNA(fMet). The formyl group appears to play a dual role in the initiator identity of N-formylmethionyl-tRNA by promoting its recognition by IF2 and preventing the misappropriation of this tRNA by the elongation apparatus. This Dehalococcoides mccartyi (strain ATCC BAA-2100 / JCM 16839 / KCTC 5957 / BAV1) protein is Methionyl-tRNA formyltransferase.